The sequence spans 2351 residues: Protein FAM186A (2351 aa).

Residues 296–340 (EAEKELSLKIIRDLSNENEMLQQKLQDAEEKCEQLIRSKIVIEQL) are a coiled coil. 8 disordered regions span residues 412–460 (ERTP…SWKR), 470–489 (ETSGPNLSDNKSGQKVSEAK), 505–538 (EMKSFSEDKSKSPTEAKRKHLSLTETKSQGGKSG), 593–667 (QFDD…SEQS), 809–838 (STVQKDHKEKEKQRQEQYLQEGQEQMSGMS), 868–976 (LQMK…RGLE), 1805–1837 (GGQSTSAQFPAPQAPPSPGQLPISRAPPTPGQP), and 1888–1907 (FQPPATAEQSPYLQAPSTPG). Basic and acidic residues predominate over residues 433 to 446 (DSTKDNVSLKKGDF). Residues 472–484 (SGPNLSDNKSGQK) are compositionally biased toward polar residues. The span at 506 to 520 (MKSFSEDKSKSPTEA) shows a compositional bias: basic and acidic residues. The segment covering 527–538 (LTETKSQGGKSG) has biased composition (polar residues). A compositionally biased stretch (basic residues) spans 603–612 (GKIKGKKHHI). 2 stretches are compositionally biased toward basic and acidic residues: residues 619 to 632 (SKEEKTEEKEELTK) and 812 to 823 (QKDHKEKEKQRQ). Residues 812–860 (QKDHKEKEKQRQEQYLQEGQEQMSGMSLKQQLLGERNLLKEHYEKISEN) are a coiled coil. Residues 824 to 838 (EQYLQEGQEQMSGMS) are compositionally biased toward polar residues. 3 stretches are compositionally biased toward basic and acidic residues: residues 901–912 (AEQEEKQKQRGQ), 939–955 (LEKENGQMRQIQKEAKH), and 964–976 (KGKEKQKPERGLE). The segment covering 1816-1835 (PQAPPSPGQLPISRAPPTPG) has biased composition (pro residues). Positions 1894–1907 (AEQSPYLQAPSTPG) are enriched in polar residues.

Belongs to the FAM186 family.

The protein is Protein FAM186A (FAM186A) of Homo sapiens (Human).